The chain runs to 133 residues: Ribosome-binding factor A (133 aa).

This sequence belongs to the RbfA family. In terms of assembly, monomer. Binds 30S ribosomal subunits, but not 50S ribosomal subunits or 70S ribosomes.

Its subcellular location is the cytoplasm. One of several proteins that assist in the late maturation steps of the functional core of the 30S ribosomal subunit. Associates with free 30S ribosomal subunits (but not with 30S subunits that are part of 70S ribosomes or polysomes). Required for efficient processing of 16S rRNA. May interact with the 5'-terminal helix region of 16S rRNA. This chain is Ribosome-binding factor A, found in Salmonella schwarzengrund (strain CVM19633).